The sequence spans 489 residues: Rhamnulokinase (489 aa).

13-17 (ASSGR) contributes to the ATP binding site. C68 and C222 are oxidised to a cystine. Residues G83 and 236-238 (HDT) contribute to the substrate site. The active-site Proton acceptor is the D237. T259 is a binding site for ATP. N296 contacts substrate. An ATP-binding site is contributed by Q304. C353 and C370 are disulfide-bonded. Residue G402 coordinates ATP. An intrachain disulfide couples C413 to C417.

This sequence belongs to the rhamnulokinase family. The cofactor is Mg(2+).

The enzyme catalyses L-rhamnulose + ATP = L-rhamnulose 1-phosphate + ADP + H(+). It functions in the pathway carbohydrate degradation; L-rhamnose degradation; glycerone phosphate from L-rhamnose: step 2/3. Its function is as follows. Involved in the catabolism of L-rhamnose (6-deoxy-L-mannose). Catalyzes the transfer of the gamma-phosphate group from ATP to the 1-hydroxyl group of L-rhamnulose to yield L-rhamnulose 1-phosphate. This chain is Rhamnulokinase, found in Shigella sonnei (strain Ss046).